We begin with the raw amino-acid sequence, 358 residues long: Putative ZDHHC-type palmitoyltransferase 4 (358 aa).

4 helical membrane passes run 28 to 48, 57 to 77, 171 to 191, and 210 to 230; these read FVGFATSLITLIAITYFTIIF, LFFIFNFFCDLSISLFLTYGI, YFFLFLSYLWVSVCYVLAHSL, and LLVIISSIGSFITFVAVGSFG. Residues 127 to 177 form the DHHC domain; sequence SYCKKCSKAKPPRCHHCSVCDKCVLKMDHHCPWIGGCVGFYNYRYFFLFLS. Asn-255 and Asn-296 each carry an N-linked (GlcNAc...) asparagine glycan. The interval 302 to 358 is disordered; that stretch reads NNKNNENNENNENNEIDNHNNNNNNNNNNNNNEKEDNINENDNLISYDTDEYNRHKK. A compositionally biased stretch (low complexity) spans 305 to 332; the sequence is NNENNENNENNEIDNHNNNNNNNNNNNN.

This sequence belongs to the DHHC palmitoyltransferase family.

It is found in the membrane. The enzyme catalyses L-cysteinyl-[protein] + hexadecanoyl-CoA = S-hexadecanoyl-L-cysteinyl-[protein] + CoA. The sequence is that of Putative ZDHHC-type palmitoyltransferase 4 from Dictyostelium discoideum (Social amoeba).